A 749-amino-acid chain; its full sequence is Poly(U)-binding-splicing factor rnp-6 (749 aa).

RRM domains follow at residues 102-176 (SRIY…LKVN) and 207-285 (FRVY…KCVT). 2 disordered regions span residues 323 to 388 (AGSS…PDVV) and 457 to 480 (IEEE…KMKR). Positions 330–354 (PSESGGSRAASPAPRAQSPATPSSS) are enriched in low complexity. One can recognise an RRM 3; atypical domain in the interval 658 to 739 (NVIVLRNMVT…NTVKAEAYDQ (82 aa)).

It belongs to the RRM half pint family.

The protein localises to the nucleus. Its function is as follows. DNA- and RNA-binding protein, involved in several nuclear processes such as pre-mRNA splicing, apoptosis and transcription regulation. Ensures the correct splicing of genes involved in immunity to promote longevity in response to infection by pathogenic bacteria such as S.aureus. This is Poly(U)-binding-splicing factor rnp-6 from Caenorhabditis elegans.